The following is a 307-amino-acid chain: Plasmodesmata-located protein 2 (307 aa).

An N-terminal signal peptide occupies residues 1-23 (MGLSISFLSIIMMMCLLFPDLNV). Over 24–275 (VVKSATTEYT…STSTGATGKT (252 aa)) the chain is Extracellular. Gnk2-homologous domains lie at 33 to 136 (TTLI…VSGF) and 141 to 240 (GMEM…YYPN). 6 disulfides stabilise this stretch: Cys40–Cys114, Cys90–Cys99, Cys102–Cys127, Cys149–Cys218, Cys194–Cys203, and Cys206–Cys231. Low complexity predominate over residues 246–268 (SSSSSSSSSSSSSGSSNSDPSTS). A disordered region spans residues 246–270 (SSSSSSSSSSSSSGSSNSDPSTSTG). The helical transmembrane segment at 276-296 (VAIIVGGAAGVGFLVICLLFA) threads the bilayer. A necessary and sufficient for plasmodesmal targeting region spans residues 276-296 (VAIIVGGAAGVGFLVICLLFA). The Cytoplasmic portion of the chain corresponds to 297 to 307 (KNLMRKKHDDY).

The protein belongs to the cysteine-rich repeat secretory protein family. Plasmodesmata-located proteins (PDLD) subfamily. As to quaternary structure, (Microbial infection) Interacts with Grapevine fanleaf virus (GFLV) 2B-MP. As to expression, highly expressed in inflorescence shoot apex. Uniformly expressed within the inflorescence meristem with the exception of a boundary zone between floral primordia and the meristem where the expression is weaker (at protein level).

It is found in the cell membrane. The protein resides in the cell junction. The protein localises to the plasmodesma. Functionally, modulates cell-to-cell trafficking. This chain is Plasmodesmata-located protein 2, found in Arabidopsis thaliana (Mouse-ear cress).